The sequence spans 226 residues: Urease accessory protein UreF (226 aa).

The protein belongs to the UreF family. UreD, UreF and UreG form a complex that acts as a GTP-hydrolysis-dependent molecular chaperone, activating the urease apoprotein by helping to assemble the nickel containing metallocenter of UreC. The UreE protein probably delivers the nickel.

It is found in the cytoplasm. Required for maturation of urease via the functional incorporation of the urease nickel metallocenter. The protein is Urease accessory protein UreF of Burkholderia cenocepacia (strain HI2424).